A 397-amino-acid chain; its full sequence is Phosphoglycerate kinase (397 aa).

Substrate-binding positions include 23 to 25 (DLN), Arg-38, 61 to 64 (HLGR), Arg-119, and Arg-152. Residues Lys-202, Glu-324, and 354–357 (GGDT) each bind ATP.

The protein belongs to the phosphoglycerate kinase family. As to quaternary structure, monomer.

The protein localises to the cytoplasm. The catalysed reaction is (2R)-3-phosphoglycerate + ATP = (2R)-3-phospho-glyceroyl phosphate + ADP. Its pathway is carbohydrate degradation; glycolysis; pyruvate from D-glyceraldehyde 3-phosphate: step 2/5. This Xanthobacter flavus protein is Phosphoglycerate kinase (pgk).